The chain runs to 665 residues: Soluble lamin-associated protein of 75 kDa (665 aa).

The interval 309–665 (AFASTSEGPE…GPGKKKAKLT (357 aa)) is disordered. Over residues 311-326 (ASTSEGPEKTPVSTRT) the composition is skewed to polar residues. Over residues 327 to 338 (RSSHLKRPKIGK) the composition is skewed to basic residues. 2 positions are modified to phosphoserine: Ser-348 and Ser-377. Over residues 376-397 (SSEEFLEEEPEQGVIDFEDESG) the composition is skewed to acidic residues. Residues 412–421 (QKQDGDKDSA) are compositionally biased toward basic and acidic residues. Residues 440–451 (TEDEDSTSEGLE) are compositionally biased toward acidic residues. 2 positions are modified to phosphoserine: Ser-447 and Ser-512. Composition is skewed to polar residues over residues 521–533 (LGSS…VSNI) and 553–566 (VSQN…SSVE). Phosphoserine occurs at positions 610, 613, and 630. Positions 646–665 (NLRRKAKGHKGPGKKKAKLT) are enriched in basic residues.

This sequence belongs to the FAM169 family.

The protein localises to the nucleus envelope. Its subcellular location is the nucleus inner membrane. The protein is Soluble lamin-associated protein of 75 kDa (Fam169a) of Mus musculus (Mouse).